We begin with the raw amino-acid sequence, 407 residues long: Probable cysteine protease atg4 (407 aa).

Cysteine 136 acts as the Nucleophile in catalysis. Catalysis depends on residues aspartate 310 and histidine 312.

It belongs to the peptidase C54 family.

The protein resides in the cytoplasm. It is found in the nucleus. The protein localises to the preautophagosomal structure. It carries out the reaction [protein]-C-terminal L-amino acid-glycyl-phosphatidylethanolamide + H2O = [protein]-C-terminal L-amino acid-glycine + a 1,2-diacyl-sn-glycero-3-phosphoethanolamine. In terms of biological role, cysteine protease that is required for autophagy. Plays a key role in cytoplasm to vacuole transport (Cvt) and autophagy by mediating both proteolytic activation and delipidation of atg8. The protease activity is required for proteolytic activation of atg8 by the cleavage of the C-terminal amino acid of atg8 to reveal a C-terminal glycine. Azg8 ubiquitin-like activity requires the exposure of the glycine at the C-terminus for its conjugation to phosphatidylethanolamine (PE) and its insertion to membranes, which is necessary for autophagy. The atg8-PE conjugate mediates tethering between adjacent membranes and stimulates membrane hemifusion, leading to expansion of the autophagosomal membrane during autophagy. In addition to the protease activity, also catalyzes deconjugation of PE-conjugated forms of atg8 during macroautophagy since atg8 delipidation is required to release the protein from membranes, which facilitates multiple events during macroautophagy, and especially for efficient autophagosome biogenesis, the assembly of atg99-containing tubulovesicular clusters into phagophores/autophagosomes, and for the disassembly of PAS-associated ATG components. Atg8 delipidation by atg4 also recycles atg8-PE generated on inappropriate membranes to maintain a reservoir of unlipidated atg8 that is required for autophagosome formation at the PAS. This chain is Probable cysteine protease atg4, found in Aspergillus oryzae (strain ATCC 42149 / RIB 40) (Yellow koji mold).